The chain runs to 304 residues: Caspase-6 (304 aa).

The disordered stretch occupies residues 1–29 (MSGAERRPAAGRVQLDSKPTPTTTADGNQ). Residues 1 to 35 (MSGAERRPAAGRVQLDSKPTPTTTADGNQNITEVD) constitute a propeptide that is removed on maturation. A compositionally biased stretch (polar residues) spans 17–29 (SKPTPTTTADGNQ). Residues 54–56 (QRR) are tri-arginine exosite. The active site involves His-133. The segment at 137–154 (DHVYAYDAQIKIETITNM) is 130's region. Cys-175 is an active-site residue. Residues 192–204 (SKDETTVNQTEVD) constitute a propeptide that is removed on maturation.

This sequence belongs to the peptidase C14A family. As to quaternary structure, heterotetramer that consists of two anti-parallel arranged heterodimers, each one formed by a 18 kDa (p18) and a 11 kDa (p11) subunit. In terms of assembly, heterotetramer that consists of two anti-parallel arranged heterodimers, each one formed by a 18 kDa (Caspase-6 subunit p18) and a 11 kDa (Caspase-6 subunit p11) subunit. Widely expressed.

It is found in the cytoplasm. The protein localises to the nucleus. The catalysed reaction is Strict requirement for Asp at position P1 and has a preferred cleavage sequence of Val-Glu-His-Asp-|-.. With respect to regulation, during activation, the N-terminal prodomain is removed by cleavage. Concomitantly, double cleavage gives rise to a large 18-kDa and a small 11-kDa subunit. The two large and two small subunits then assemble to form the active CASP6 complex. Intramolecular cleavage at Asp-191 is a prerequisite for CASP6 self-activation. Its function is as follows. Cysteine protease that plays essential roles in programmed cell death, development and innate immunity. Acts as a non-canonical executioner caspase during apoptosis: localizes in the nucleus and cleaves the nuclear structural protein lamin-A/LMNA thereby inducing nuclear shrinkage and fragmentation. Lamin-A/LMNA cleavage is required for chromatin condensation and nuclear disassembly during apoptotic execution. Plays an essential role in defense against viruses by acting as a central mediator of the ZBP1-mediated pyroptosis, apoptosis, and necroptosis (PANoptosis), independently of its cysteine protease activity. PANoptosis is a unique inflammatory programmed cell death, which provides a molecular scaffold that allows the interactions and activation of machinery required for inflammasome/pyroptosis, apoptosis and necroptosis. In Gallus gallus (Chicken), this protein is Caspase-6.